The primary structure comprises 170 residues: Adenine phosphoribosyltransferase (170 aa).

Belongs to the purine/pyrimidine phosphoribosyltransferase family. As to quaternary structure, homodimer.

The protein localises to the cytoplasm. The catalysed reaction is AMP + diphosphate = 5-phospho-alpha-D-ribose 1-diphosphate + adenine. Its pathway is purine metabolism; AMP biosynthesis via salvage pathway; AMP from adenine: step 1/1. Functionally, catalyzes a salvage reaction resulting in the formation of AMP, that is energically less costly than de novo synthesis. This Thermotoga sp. (strain RQ2) protein is Adenine phosphoribosyltransferase.